A 271-amino-acid polypeptide reads, in one-letter code: Keratin-associated protein 10-5 (271 aa).

22 consecutive repeat copies span residues 26–30 (CCEPP), 51–55 (CCQAA), 73–77 (CCQPA), 78–82 (CCASS), 88–92 (CCVPV), 93–97 (CCKPV), 98–102 (CCLPT), 110–114 (CCQQS), 120–124 (CCASS), 130–134 (CCVPV), 135–139 (CCKPV), 140–144 (CCVPT), 152–156 (CCQHS), 162–166 (CCTSS), 177–181 (CCKPV), 187–191 (CCVPV), 199–203 (CCQQS), 209–213 (CCTTS), 214–218 (CCRPS), 233–237 (CCLPI), 240–244 (CCAPA), and 251–255 (CCRPA). The interval 26–255 (CCEPPCGTAP…SYQASCCRPA (230 aa)) is 22 X 5 AA repeats of C-C-X(3).

This sequence belongs to the KRTAP type 10 family. In terms of assembly, interacts with hair keratins. Restricted to a narrow region of the hair fiber cuticle, lying approximately 20 cell layers above the apex of the dermal papilla of the hair root; not detected in any other tissues.

Its function is as follows. In the hair cortex, hair keratin intermediate filaments are embedded in an interfilamentous matrix, consisting of hair keratin-associated proteins (KRTAP), which are essential for the formation of a rigid and resistant hair shaft through their extensive disulfide bond cross-linking with abundant cysteine residues of hair keratins. The matrix proteins include the high-sulfur and high-glycine-tyrosine keratins. The sequence is that of Keratin-associated protein 10-5 (KRTAP10-5) from Homo sapiens (Human).